The chain runs to 275 residues: Large ribosomal subunit protein uL2c (275 aa).

Disordered regions lie at residues 36–56 (KNHR…HRGK) and 224–275 (VMNP…RKRK). The segment covering 255 to 275 (LGRKTRKKPKYSNRYILRKRK) has biased composition (basic residues).

This sequence belongs to the universal ribosomal protein uL2 family. As to quaternary structure, part of the 50S ribosomal subunit.

Its subcellular location is the plastid. It localises to the chloroplast. The chain is Large ribosomal subunit protein uL2c (rpl2) from Gracilaria tenuistipitata var. liui (Red alga).